We begin with the raw amino-acid sequence, 300 residues long: Tyrosine recombinase XerC (300 aa).

The Core-binding (CB) domain maps to 1 to 86 (MESVLDAFDQ…AVKTFTAWAV (86 aa)). Residues 107 to 294 (TLPAVLRQDQ…TVARLRAVHD (188 aa)) enclose the Tyr recombinase domain. Active-site residues include Arg151, Lys175, His246, Arg249, and His272. Tyr281 acts as the O-(3'-phospho-DNA)-tyrosine intermediate in catalysis.

The protein belongs to the 'phage' integrase family. XerC subfamily. Forms a cyclic heterotetrameric complex composed of two molecules of XerC and two molecules of XerD.

It is found in the cytoplasm. Functionally, site-specific tyrosine recombinase, which acts by catalyzing the cutting and rejoining of the recombining DNA molecules. The XerC-XerD complex is essential to convert dimers of the bacterial chromosome into monomers to permit their segregation at cell division. It also contributes to the segregational stability of plasmids. In Mycobacterium sp. (strain JLS), this protein is Tyrosine recombinase XerC.